The chain runs to 303 residues: Dihydroorotate dehydrogenase B (NAD(+)), catalytic subunit (303 aa).

FMN is bound by residues Ser23 and 47-48; that span reads KS. Residues Lys47, 71–75, and Asn125 each bind substrate; that span reads NAMGL. Asn125 is a binding site for FMN. The active-site Nucleophile is the Cys128. FMN contacts are provided by Lys163 and Ile189. 190–191 contributes to the substrate binding site; it reads NT. Residues Gly215, 241-242, and 263-264 contribute to the FMN site; these read GG and GT.

Belongs to the dihydroorotate dehydrogenase family. Type 1 subfamily. As to quaternary structure, heterotetramer of 2 PyrK and 2 PyrD type B subunits. The cofactor is FMN.

It localises to the cytoplasm. The enzyme catalyses (S)-dihydroorotate + NAD(+) = orotate + NADH + H(+). The protein operates within pyrimidine metabolism; UMP biosynthesis via de novo pathway; orotate from (S)-dihydroorotate (NAD(+) route): step 1/1. Its function is as follows. Catalyzes the conversion of dihydroorotate to orotate with NAD(+) as electron acceptor. The polypeptide is Dihydroorotate dehydrogenase B (NAD(+)), catalytic subunit (pyrD) (Pyrococcus horikoshii (strain ATCC 700860 / DSM 12428 / JCM 9974 / NBRC 100139 / OT-3)).